A 257-amino-acid chain; its full sequence is Short chain dehydrogenase ausX (257 aa).

NADP(+) contacts are provided by Ile11, Asp57, Arg119, Tyr151, Lys155, and Val184. The active-site Proton acceptor is the Tyr151. The active-site Lowers pKa of active site Tyr is Lys155.

Belongs to the short-chain dehydrogenases/reductases (SDR) family.

The protein operates within secondary metabolite biosynthesis; terpenoid biosynthesis. Short chain dehydrogenase; part of the gene cluster that mediates the biosynthesis of calidodehydroaustin, a fungal meroterpenoid. The first step of the pathway is the synthesis of 3,5-dimethylorsellinic acid by the polyketide synthase ausA. 3,5-dimethylorsellinic acid is then prenylated by the polyprenyl transferase ausN. Further epoxidation by the FAD-dependent monooxygenase ausM and cyclization by the probable terpene cyclase ausL lead to the formation of protoaustinoid A. Protoaustinoid A is then oxidized to spiro-lactone preaustinoid A3 by the combined action of the FAD-binding monooxygenases ausB and ausC, and the dioxygenase ausE. Acid-catalyzed keto-rearrangement and ring contraction of the tetraketide portion of preaustinoid A3 by ausJ lead to the formation of preaustinoid A4. The aldo-keto reductase ausK, with the help of ausH, is involved in the next step by transforming preaustinoid A4 into isoaustinone which is in turn hydroxylated by the P450 monooxygenase ausI to form austinolide. The cytochrome P450 monooxygenase ausG modifies austinolide to austinol. Austinol is further acetylated to austin by the O-acetyltransferase ausP, which spontaneously changes to dehydroaustin. The cytochrome P450 monooxygenase ausR then converts dehydroaustin is into 7-dehydrodehydroaustin. The hydroxylation catalyzed by ausR permits the O-acetyltransferase ausQ to add an additional acetyl group to the molecule, leading to the formation of acetoxydehydroaustin. The short chain dehydrogenase ausT catalyzes the reduction of the double bond present between carbon atoms 1 and 2 to convert 7-dehydrodehydroaustin into 1,2-dihydro-7-hydroxydehydroaustin. AusQ catalyzes not only an acetylation reaction but also the addition of the PKS ausV diketide product to 1,2-dihydro-7-hydroxydehydroaustin, forming precalidodehydroaustin. Finally, the iron/alpha-ketoglutarate-dependent dioxygenase converts precalidodehydroaustin into calidodehydroaustin. The chain is Short chain dehydrogenase ausX from Aspergillus calidoustus.